A 60-amino-acid polypeptide reads, in one-letter code: Large ribosomal subunit protein bL32 (60 aa).

This sequence belongs to the bacterial ribosomal protein bL32 family.

The sequence is that of Large ribosomal subunit protein bL32 from Oenococcus oeni (strain ATCC BAA-331 / PSU-1).